The following is a 358-amino-acid chain: Carbamoyl phosphate synthase small chain (358 aa).

CPSase stretches follow at residues 1 to 168 (MYNR…PALG) and 1 to 171 (MYNR…GRGR). L-glutamine contacts are provided by S46, G220, and G222. The Glutamine amidotransferase type-1 domain maps to 172-358 (RVVLVDLGMK…FIKNIDNNMK (187 aa)). Residue C247 is the Nucleophile of the active site. Positions 248, 251, 289, 291, and 292 each coordinate L-glutamine. Catalysis depends on residues H332 and E334.

This sequence belongs to the CarA family. In terms of assembly, composed of two chains; the small (or glutamine) chain promotes the hydrolysis of glutamine to ammonia, which is used by the large (or ammonia) chain to synthesize carbamoyl phosphate. Tetramer of heterodimers (alpha,beta)4.

The catalysed reaction is hydrogencarbonate + L-glutamine + 2 ATP + H2O = carbamoyl phosphate + L-glutamate + 2 ADP + phosphate + 2 H(+). The enzyme catalyses L-glutamine + H2O = L-glutamate + NH4(+). The protein operates within amino-acid biosynthesis; L-arginine biosynthesis; carbamoyl phosphate from bicarbonate: step 1/1. It participates in pyrimidine metabolism; UMP biosynthesis via de novo pathway; (S)-dihydroorotate from bicarbonate: step 1/3. Functionally, small subunit of the glutamine-dependent carbamoyl phosphate synthetase (CPSase). CPSase catalyzes the formation of carbamoyl phosphate from the ammonia moiety of glutamine, carbonate, and phosphate donated by ATP, constituting the first step of 2 biosynthetic pathways, one leading to arginine and/or urea and the other to pyrimidine nucleotides. The small subunit (glutamine amidotransferase) binds and cleaves glutamine to supply the large subunit with the substrate ammonia. The protein is Carbamoyl phosphate synthase small chain of Fusobacterium nucleatum subsp. nucleatum (strain ATCC 25586 / DSM 15643 / BCRC 10681 / CIP 101130 / JCM 8532 / KCTC 2640 / LMG 13131 / VPI 4355).